Here is a 382-residue protein sequence, read N- to C-terminus: Heme A synthase (382 aa).

8 helical membrane-spanning segments follow: residues 25–45 (GAVR…VAVG), 112–132 (LLGR…WARG), 138–158 (LLLG…IGWI), 176–196 (LALH…LAAG), 211–231 (VVAG…GLVA), 270–290 (LALV…VAIA), 303–323 (AAAG…GLGI), and 327–347 (LLHV…AVLI). Histidine 277 serves as a coordination point for heme. Position 338 (histidine 338) interacts with heme.

Belongs to the COX15/CtaA family. Type 2 subfamily. In terms of assembly, interacts with CtaB. It depends on heme b as a cofactor.

Its subcellular location is the cell membrane. It carries out the reaction Fe(II)-heme o + 2 A + H2O = Fe(II)-heme a + 2 AH2. The protein operates within porphyrin-containing compound metabolism; heme A biosynthesis; heme A from heme O: step 1/1. Its function is as follows. Catalyzes the conversion of heme O to heme A by two successive hydroxylations of the methyl group at C8. The first hydroxylation forms heme I, the second hydroxylation results in an unstable dihydroxymethyl group, which spontaneously dehydrates, resulting in the formyl group of heme A. The polypeptide is Heme A synthase (Methylorubrum extorquens (strain PA1) (Methylobacterium extorquens)).